Reading from the N-terminus, the 393-residue chain is Dual specificity mitogen-activated protein kinase kinase 1 (393 aa).

A disordered region spans residues 1–26 (MPKKKPTPIQLNPTPDGSAVNGTSSA). A compositionally biased stretch (polar residues) spans 9 to 26 (IQLNPTPDGSAVNGTSSA). In terms of domain architecture, Protein kinase spans 68 to 361 (FEKISELGAG…LKQLLVHAFI (294 aa)). Residues 74-82 (LGAGNGGVV) and Lys97 each bind ATP. The active-site Proton acceptor is Asp190. Phosphoserine; by RAF is present on residues Ser218 and Ser222. Positions 270–307 (ELELLFGCQVEGDAAETPPRPRTPGRPLSSYGMDSRPP) are RAF1-binding. A Phosphothreonine modification is found at Thr286. Thr292 carries the phosphothreonine; by MAPK1 modification. At Ser298 the chain carries Phosphoserine; by PAK.

Belongs to the protein kinase superfamily. STE Ser/Thr protein kinase family. MAP kinase kinase subfamily. In terms of assembly, found in a complex with at least BRAF, HRAS, MAP2K1, MAPK3/ERK1 and RGS14. Forms a heterodimer with MAP2K2/MEK2. Forms heterodimers with KSR2 which further dimerize to form tetramers. Interacts with KSR1 or KSR2 and BRAF; the interaction with KSR1 or KSR2 mediates KSR1-BRAF or KSR2-BRAF dimerization. Interacts with ARBB2, LAMTOR3, MAPK1/ERK2 and RAF1. Interacts with MAPK1/ERK2. Interacts with MORG1. Interacts with PPARG. Interacts with isoform 1 of VRK2. Interacts with SGK1. Interacts with BIRC6/bruce. Interacts with KAT7; the interaction promotes KAT7 phosphorylation. Interacts with RAF1 and NEK10; the interaction is required for ERK1/2-signaling pathway activation in response to UV irradiation. Interacts with TRAF3IP3. Interacts with MOS. In terms of processing, phosphorylation at Ser-218 and Ser-222 by MAP kinase kinase kinases (BRAF or MEKK1) positively regulates the kinase activity. Also phosphorylated at Thr-292 by MAPK1/ERK2 and at Ser-298 by PAK. MAPK1/ERK2 phosphorylation of Thr-292 occurs in response to cellular adhesion and leads to inhibition of Ser-298 phosphorylation by PAK. Autophosphorylated at Ser-218 and Ser-222, autophosphosphorylation is promoted by NEK10 following UV irradiation.

The protein localises to the cytoplasm. Its subcellular location is the cytoskeleton. It localises to the microtubule organizing center. It is found in the centrosome. The protein resides in the spindle pole body. The protein localises to the nucleus. Its subcellular location is the membrane. The enzyme catalyses L-seryl-[protein] + ATP = O-phospho-L-seryl-[protein] + ADP + H(+). It carries out the reaction L-threonyl-[protein] + ATP = O-phospho-L-threonyl-[protein] + ADP + H(+). It catalyses the reaction L-tyrosyl-[protein] + ATP = O-phospho-L-tyrosyl-[protein] + ADP + H(+). With respect to regulation, ras proteins such as HRAS mediate the activation of RAF proteins such as RAF1 or BRAF which in turn activate extracellular signal-regulated kinases (ERK) through MAPK (mitogen-activated protein kinases) and ERK kinases MAP2K1/MEK1 and MAP2K2/MEK2. Activation occurs through phosphorylation of Ser-218 and Ser-222. MAP2K1/MEK1 binds KSR1 or KSR2 releasing the inhibitory intramolecular interaction between KSR1 or KSR2 protein kinase and N-terminal domains. This allows KSR1 or KSR2 dimerization with BRAF leading to BRAF activation and phosphorylation of MAP2K1. MAP2K1/MEK1 is also the target of negative feed-back regulation by its substrate kinases, such as MAPK1/ERK2. These phosphorylate MAP2K1/MEK1 on Thr-292, thereby facilitating dephosphorylation of the activating residues Ser-218 and Ser-222. Inhibited by serine/threonine phosphatase 2A. Its function is as follows. Dual specificity protein kinase which acts as an essential component of the MAP kinase signal transduction pathway. Binding of extracellular ligands such as growth factors, cytokines and hormones to their cell-surface receptors activates RAS and this initiates RAF1 activation. RAF1 then further activates the dual-specificity protein kinases MAP2K1/MEK1 and MAP2K2/MEK2. Both MAP2K1/MEK1 and MAP2K2/MEK2 function specifically in the MAPK/ERK cascade, and catalyze the concomitant phosphorylation of a threonine and a tyrosine residue in a Thr-Glu-Tyr sequence located in the extracellular signal-regulated kinases MAPK3/ERK1 and MAPK1/ERK2, leading to their activation and further transduction of the signal within the MAPK/ERK cascade. Activates BRAF in a KSR1 or KSR2-dependent manner; by binding to KSR1 or KSR2 releases the inhibitory intramolecular interaction between KSR1 or KSR2 protein kinase and N-terminal domains which promotes KSR1 or KSR2-BRAF dimerization and BRAF activation. Depending on the cellular context, this pathway mediates diverse biological functions such as cell growth, adhesion, survival and differentiation, predominantly through the regulation of transcription, metabolism and cytoskeletal rearrangements. One target of the MAPK/ERK cascade is peroxisome proliferator-activated receptor gamma (PPARG), a nuclear receptor that promotes differentiation and apoptosis. MAP2K1/MEK1 has been shown to export PPARG from the nucleus. The MAPK/ERK cascade is also involved in the regulation of endosomal dynamics, including lysosome processing and endosome cycling through the perinuclear recycling compartment (PNRC), as well as in the fragmentation of the Golgi apparatus during mitosis. The chain is Dual specificity mitogen-activated protein kinase kinase 1 (MAP2K1) from Cricetulus griseus (Chinese hamster).